The following is a 136-amino-acid chain: ATP synthase epsilon chain (136 aa).

Belongs to the ATPase epsilon chain family. As to quaternary structure, F-type ATPases have 2 components, CF(1) - the catalytic core - and CF(0) - the membrane proton channel. CF(1) has five subunits: alpha(3), beta(3), gamma(1), delta(1), epsilon(1). CF(0) has three main subunits: a, b and c.

The protein localises to the cell membrane. Its function is as follows. Produces ATP from ADP in the presence of a proton gradient across the membrane. The protein is ATP synthase epsilon chain of Exiguobacterium sp. (strain ATCC BAA-1283 / AT1b).